The chain runs to 396 residues: MVKKVVSDLELKDKKVLVRADFNVPMKDGNITNDNRIVEALPTIKYIIEQGGKVILFSHLGKVKTEEDKANLSLQPVANRLSELLDKEVQFVAETRGEKLESAINALQPGDVLLFENTRFEDVDGKKESKNDAELGKYWASLGDVFVNDAFGTAHREHASNVGVATHLDTAAGFLMEKEIKFIGGVVENPERPFVAILGGAKVSDKIGVIENLLEVADKVLIGGGMAYTFLKAQGKEIGHSLLEEDKIDLAKDLMERGKDKLVLPIDAKVTKEFSNDGEIEAVAIDHIPADLQSLDIGPKTVELFGKELEGAKTVVWNGPMGVFEMSNFAKGTVGVCKAIAELKGATTIIGGGDSAAAAMDLGFADKFTHISTGGGASLEYLEGKELPGIKSISDK.

Substrate-binding positions include 21–23 (DFN), Arg-36, 59–62 (HLGK), Arg-119, and Arg-156. ATP-binding positions include Lys-206, Glu-325, and 352-355 (GGDS).

It belongs to the phosphoglycerate kinase family. As to quaternary structure, monomer.

The protein resides in the cytoplasm. It carries out the reaction (2R)-3-phosphoglycerate + ATP = (2R)-3-phospho-glyceroyl phosphate + ADP. The protein operates within carbohydrate degradation; glycolysis; pyruvate from D-glyceraldehyde 3-phosphate: step 2/5. In Macrococcus caseolyticus (strain JCSC5402) (Macrococcoides caseolyticum), this protein is Phosphoglycerate kinase.